We begin with the raw amino-acid sequence, 442 residues long: D-inositol 3-phosphate glycosyltransferase (442 aa).

Residue His15 participates in 1D-myo-inositol 3-phosphate binding. Residues 21–22 (QP) and Gly29 contribute to the UDP-N-acetyl-alpha-D-glucosamine site. 1D-myo-inositol 3-phosphate contacts are provided by residues 26 to 31 (DAGGMN), Lys84, Tyr117, Thr141, and Arg161. Residues Arg235, Lys240, and Gln299 each coordinate UDP-N-acetyl-alpha-D-glucosamine. The Mg(2+) site is built by Tyr308, Arg309, and Ser311. 2 residues coordinate UDP-N-acetyl-alpha-D-glucosamine: Glu321 and Glu329. Thr335 lines the Mg(2+) pocket.

It belongs to the glycosyltransferase group 1 family. MshA subfamily. Homodimer.

It catalyses the reaction 1D-myo-inositol 3-phosphate + UDP-N-acetyl-alpha-D-glucosamine = 1D-myo-inositol 2-acetamido-2-deoxy-alpha-D-glucopyranoside 3-phosphate + UDP + H(+). Catalyzes the transfer of a N-acetyl-glucosamine moiety to 1D-myo-inositol 3-phosphate to produce 1D-myo-inositol 2-acetamido-2-deoxy-glucopyranoside 3-phosphate in the mycothiol biosynthesis pathway. This is D-inositol 3-phosphate glycosyltransferase from Rhodococcus erythropolis (strain PR4 / NBRC 100887).